A 344-amino-acid polypeptide reads, in one-letter code: N-acetyl-gamma-glutamyl-phosphate reductase (344 aa).

The active site involves Cys150.

This sequence belongs to the NAGSA dehydrogenase family. Type 1 subfamily.

The protein resides in the cytoplasm. It carries out the reaction N-acetyl-L-glutamate 5-semialdehyde + phosphate + NADP(+) = N-acetyl-L-glutamyl 5-phosphate + NADPH + H(+). The protein operates within amino-acid biosynthesis; L-arginine biosynthesis; N(2)-acetyl-L-ornithine from L-glutamate: step 3/4. Functionally, catalyzes the NADPH-dependent reduction of N-acetyl-5-glutamyl phosphate to yield N-acetyl-L-glutamate 5-semialdehyde. The protein is N-acetyl-gamma-glutamyl-phosphate reductase of Ectopseudomonas mendocina (strain ymp) (Pseudomonas mendocina).